Consider the following 387-residue polypeptide: Migration and invasion-inhibitory protein (387 aa).

Polar residues predominate over residues 50 to 59 (NLEMPLSQET). Disordered stretches follow at residues 50–80 (NLEM…DPLD) and 133–172 (VSLG…SAVP). Residues 60 to 69 (SSASSVAPSS) show a composition bias toward low complexity. Positions 70–80 (QDKRHMLDPLD) are enriched in basic and acidic residues. Position 307 is a phosphoserine (Ser-307).

As to quaternary structure, interacts with IGFBP2.

Its function is as follows. Inhibits glioma cells invasion and down-regulates adhesion- and motility-associated genes such as NFKB2 and ICAM1. Exhibits opposing effects to IGFBP2 on cell invasion. The chain is Migration and invasion-inhibitory protein (Miip) from Mus musculus (Mouse).